A 155-amino-acid chain; its full sequence is Large ribosomal subunit protein uL22c (155 aa).

This sequence belongs to the universal ribosomal protein uL22 family. Part of the 50S ribosomal subunit.

Its subcellular location is the plastid. It localises to the chloroplast. Functionally, this protein binds specifically to 23S rRNA. In terms of biological role, the globular domain of the protein is located near the polypeptide exit tunnel on the outside of the subunit, while an extended beta-hairpin is found that lines the wall of the exit tunnel in the center of the 70S ribosome. The sequence is that of Large ribosomal subunit protein uL22c (rpl22) from Solanum tuberosum (Potato).